The primary structure comprises 235 residues: 15,16-dihydrobiliverdin:ferredoxin oxidoreductase (235 aa).

This sequence belongs to the HY2 family.

It catalyses the reaction 15,16-dihydrobiliverdin + oxidized 2[4Fe-4S]-[ferredoxin] = biliverdin IXalpha + reduced 2[4Fe-4S]-[ferredoxin] + 2 H(+). Catalyzes the two-electron reduction of biliverdin IX-alpha at the C15 methine bridge. The protein is 15,16-dihydrobiliverdin:ferredoxin oxidoreductase of Synechococcus sp. (strain CC9605).